Consider the following 158-residue polypeptide: 6,7-dimethyl-8-ribityllumazine synthase 2 (158 aa).

5-amino-6-(D-ribitylamino)uracil contacts are provided by residues Trp20, 54 to 56 (AYE), and 78 to 80 (FVI). The Proton donor role is filled by Arg86. Ser111 serves as a coordination point for 5-amino-6-(D-ribitylamino)uracil. His125 is a binding site for (2S)-2-hydroxy-3-oxobutyl phosphate.

This sequence belongs to the DMRL synthase family. In terms of assembly, homodecamer, arranged as a dimer of pentamers.

Its subcellular location is the cytoplasm. It carries out the reaction (2S)-2-hydroxy-3-oxobutyl phosphate + 5-amino-6-(D-ribitylamino)uracil = 6,7-dimethyl-8-(1-D-ribityl)lumazine + phosphate + 2 H2O + H(+). Its pathway is cofactor biosynthesis; riboflavin biosynthesis; riboflavin from 2-hydroxy-3-oxobutyl phosphate and 5-amino-6-(D-ribitylamino)uracil: step 1/2. Catalyzes the formation of 6,7-dimethyl-8-ribityllumazine by condensation of 5-amino-6-(D-ribitylamino)uracil with 3,4-dihydroxy-2-butanone 4-phosphate. This is the penultimate step in the biosynthesis of riboflavin. The isozyme RibH2 but not RibH1 is essential for Brucella intracellular survival and replication inside macrophages or in mice. Displays low catalytic activity in comparison with the isozyme RibH1. Is a highly immunogenic protein. Activates dendritic cells (DCs) in vitro, increasing the levels of costimulatory molecules and the secretion of pro-inflammatory cytokines, and recruits DCs, B cells and CD8+ T cells in vivo, both effects in a TLR4-dependent manner. Induces the cross presentation of covalently attached peptides and generates a strong and long-lasting humoral immune response without adjuvants; TLR4 signaling is necessary for the induction of the cytotoxic response but not for antigen cross presentation. Elicits a TLR4-mediated protective response against B16 melanoma in mice, slowing tumor growth and prolonging mice survival. The polypeptide is 6,7-dimethyl-8-ribityllumazine synthase 2 (Brucella abortus (strain 2308)).